Here is a 160-residue protein sequence, read N- to C-terminus: Endoribonuclease YbeY (160 aa).

Zn(2+) is bound by residues His-112, His-116, and His-122. Residues 141-160 (ELGHPDPYACDDEEPPSKEK) form a disordered region.

The protein belongs to the endoribonuclease YbeY family. It depends on Zn(2+) as a cofactor.

It is found in the cytoplasm. Its function is as follows. Single strand-specific metallo-endoribonuclease involved in late-stage 70S ribosome quality control and in maturation of the 3' terminus of the 16S rRNA. The sequence is that of Endoribonuclease YbeY from Pseudomonas aeruginosa (strain UCBPP-PA14).